Here is a 363-residue protein sequence, read N- to C-terminus: Cyclin-D1-1 (363 aa).

The tract at residues 39 to 77 (ELEREGEPAQGSSPSSSLSCAAAAAAAADDDDEDEDEHG) is disordered. Low complexity predominate over residues 50–65 (SSPSSSLSCAAAAAAA). Over residues 66 to 75 (ADDDDEDEDE) the composition is skewed to acidic residues.

The protein belongs to the cyclin family. Cyclin D subfamily.

This is Cyclin-D1-1 (CYCD1-1) from Oryza sativa subsp. japonica (Rice).